The chain runs to 187 residues: MDFYSLIFLSCALGMDAFAVSLCKSFSVKKLHLKHYLIVGIYFGGFQALMPTIGYFIGITFASFIASIDHWIAFILLSLIGLKMIKESLENENCNSNAKQFGFKTMLALAIATSIDALAVGVSFAFLNVNLLLAIFLIGIITFILCIIALKIGNKFGIYLKNKAELLGGLVLIILGVKILIEHLFFD.

A run of 6 helical transmembrane segments spans residues 3–23 (FYSLIFLSCALGMDAFAVSLC), 35–55 (HYLIVGIYFGGFQALMPTIGY), 56–76 (FIGITFASFIASIDHWIAFIL), 107–127 (LALAIATSIDALAVGVSFAFL), 129–149 (VNLLLAIFLIGIITFILCIIA), and 166–186 (LLGGLVLIILGVKILIEHLFF).

Belongs to the MntP (TC 9.B.29) family.

Its subcellular location is the cell inner membrane. Functionally, probably functions as a manganese efflux pump. This Campylobacter jejuni subsp. doylei (strain ATCC BAA-1458 / RM4099 / 269.97) protein is Putative manganese efflux pump MntP.